The primary structure comprises 325 residues: Peroxidase RIP1 (325 aa).

The signal sequence occupies residues 1 to 21; sequence MASSSPCQIFLVFVMVTLVTS. Intrachain disulfides connect Cys-38–Cys-118, Cys-71–Cys-76, Cys-125–Cys-321, and Cys-206–Cys-231. The active-site Proton acceptor is the His-69. The Ca(2+) site is built by Asp-70, Val-73, Gly-75, Asp-77, and Ser-79. N-linked (GlcNAc...) asparagine glycosylation is present at Asn-87. Pro-169 serves as a coordination point for substrate. The N-linked (GlcNAc...) asparagine glycan is linked to Asn-174. Residue His-199 coordinates heme b. Position 200 (Thr-200) interacts with Ca(2+). Asn-215 carries an N-linked (GlcNAc...) asparagine glycan. Asp-244, Thr-246, and Glu-251 together coordinate Ca(2+).

The protein belongs to the peroxidase family. Classical plant (class III) peroxidase subfamily. Requires heme b as cofactor. The cofactor is Ca(2+). Expressed in the differentiating root epidermis following inoculation with the bacterial symbiont Sinorhizobium meliloti.

It is found in the secreted. It catalyses the reaction 2 a phenolic donor + H2O2 = 2 a phenolic radical donor + 2 H2O. In terms of biological role, removal of H(2)O(2), oxidation of toxic reductants, biosynthesis and degradation of lignin, suberization, auxin catabolism, response to environmental stresses such as wounding, pathogen attack and oxidative stress. These functions might be dependent on each isozyme/isoform in each plant tissue. The chain is Peroxidase RIP1 from Medicago truncatula (Barrel medic).